Reading from the N-terminus, the 229-residue chain is MLSTSLPVCFLVIGAALCAPERMQNDPDPHDSTAQGSDNHSDHIAPLAKRSPHYDFGLGKRAYSYVSEYKRLPVYNFGLGKRSRPYSFGLGKRSVDEDQTNDDQQQIMNNDLDQAALAEFFDQYDDAGYEKRARPYSFGLGKRFADDDTSEEKRARAYDFGLGKRLPLYNFGLGKRARSYNFGLGKRLASKFNFGLGKRERDMHRFSFGLGKRSADDASTEDSDNYFDV.

Positions 1-18 (MLSTSLPVCFLVIGAALC) are cleaved as a signal peptide. Residues 19–48 (APERMQNDPDPHDSTAQGSDNHSDHIAPLA) constitute a propeptide that is removed on maturation. A disordered region spans residues 23–46 (MQNDPDPHDSTAQGSDNHSDHIAP). L58 carries the post-translational modification Leucine amide. Positions 62-80 (AYSYVSEYKRLPVYNFGLG) are excised as a propeptide. Position 90 is a leucine amide (L90). The propeptide occupies 94 to 130 (SVDEDQTNDDQQQIMNNDLDQAALAEFFDQYDDAGYE). Residue L140 is modified to Leucine amide. The propeptide occupies 144 to 152 (FADDDTSEE). Leucine amide occurs at positions 162, 173, 184, 196, and 210. A propeptide spanning residues 214-229 (SADDASTEDSDNYFDV) is cleaved from the precursor.

It belongs to the allatostatin family. As to expression, allatostatin-A-1: Expressed in antennal lobe (AL), corpora cardiaca (CC), corpora allata (CA) and gnathal ganglion (GNG) (at protein level). Expression in AL and GNG detected in most animals, in CC and CA in some animals (at protein level). Allatostatin-A-3: Expressed in antennal lobe (AL), corpora cardiaca (CC), corpora allata (CA) and gnathal ganglion (GNG) (at protein level). Expression in AL detected in all animals, in GNG, CC and CA in most animals (at protein level). Allatostatin-A-4: Expressed in antennal lobe (AL), corpora cardiaca (CC), corpora allata (CA) and gnathal ganglion (GNG) in all animals (at protein level). Allatostatin-A-5: Expressed in antennal lobe (AL), corpora cardiaca (CC), corpora allata (CA) and gnathal ganglion (GNG) in all animals (at protein level). Allatostatin-A-6: Expressed in antennal lobe (AL) and gnathal ganglion (GNG) (at protein level). Expression in AL detected in some animals, in GNG in few animals (at protein level). Not expressed in corpora cardiaca (CC) and corpora allata (CA) (at protein level). Allatostatin-A-7: Expressed in antennal lobe (AL), corpora cardiaca (CC), corpora allata (CA) and gnathal ganglion (GNG) (at protein level). Expression in AL detected in all animals, in GNG, CC and CA in most animals (at protein level). Allatostatin-A-8: Expressed in antennal lobe (AL), corpora cardiaca (CC), corpora allata (CA) and gnathal ganglion (GNG) (at protein level). Expression in AL detected in all animals, in GNG, CC and CA in most animals (at protein level). Allatostatin-A-9: Expressed in antennal lobe (AL), corpora cardiaca (CC), corpora allata (CA) and gnathal ganglion (GNG) (at protein level). Expression in AL detected in all animals, in GNG in most animals and in CC and CA in some animals (at protein level).

The protein resides in the secreted. Functionally, neuropeptide inhibitors of juvenile hormone synthesis and gut muscle contraction. The protein is Allatostatin-A of Agrotis ipsilon (Black cutworm moth).